Here is a 78-residue protein sequence, read N- to C-terminus: Exodeoxyribonuclease 7 small subunit (78 aa).

This sequence belongs to the XseB family. Heterooligomer composed of large and small subunits.

Its subcellular location is the cytoplasm. The enzyme catalyses Exonucleolytic cleavage in either 5'- to 3'- or 3'- to 5'-direction to yield nucleoside 5'-phosphates.. In terms of biological role, bidirectionally degrades single-stranded DNA into large acid-insoluble oligonucleotides, which are then degraded further into small acid-soluble oligonucleotides. This chain is Exodeoxyribonuclease 7 small subunit, found in Finegoldia magna (strain ATCC 29328 / DSM 20472 / WAL 2508) (Peptostreptococcus magnus).